Consider the following 131-residue polypeptide: Snaclec macrovipecetin subunit alpha (131 aa).

3 disulfide bridges follow: Cys-2-Cys-13, Cys-30-Cys-125, and Cys-100-Cys-117. In terms of domain architecture, C-type lectin spans 9–126; the sequence is HEEHCYKVFR…CEDKNPFICK (118 aa).

Heterodimer of subunits alpha and beta; disulfide-linked. Expressed by the venom gland.

It is found in the secreted. Functionally, interferes with one step of hemostasis (modulation of platelet aggregation, or coagulation cascade, for example). This is Snaclec macrovipecetin subunit alpha from Macrovipera lebetinus (Levantine viper).